Reading from the N-terminus, the 163-residue chain is Large ribosomal subunit protein uL11 (163 aa).

This sequence belongs to the universal ribosomal protein uL11 family. Part of the ribosomal stalk of the 50S ribosomal subunit. Interacts with L10 and the large rRNA to form the base of the stalk. L10 forms an elongated spine to which L12 dimers bind in a sequential fashion forming a multimeric L10(L12)X complex.

Functionally, forms part of the ribosomal stalk which helps the ribosome interact with GTP-bound translation factors. The chain is Large ribosomal subunit protein uL11 from Thermococcus onnurineus (strain NA1).